Consider the following 117-residue polypeptide: Non-specific lipid-transfer protein 1 (117 aa).

Positions 1-26 (MARAQVLLMAAALVLMLTAAPRAAVA) are cleaved as a signal peptide. 4 disulfides stabilise this stretch: C29/C76, C39/C53, C54/C99, and C74/C113. D33 is lipidated: Cis-14-hydroxy-10,13-dioxo-7-heptadecenoic acid aspartate ester.

This sequence belongs to the plant LTP family. In terms of tissue distribution, aleurone layer of developing and germinating seeds.

Plant non-specific lipid-transfer proteins transfer phospholipids as well as galactolipids across membranes. May play a role in wax or cutin deposition in the cell walls of expanding epidermal cells and certain secretory tissues. The chain is Non-specific lipid-transfer protein 1 (LTP1) from Hordeum vulgare (Barley).